A 270-amino-acid chain; its full sequence is Putative phosphoenolpyruvate synthase regulatory protein (270 aa).

150-157 (GVSRCGKT) is an ADP binding site.

It belongs to the pyruvate, phosphate/water dikinase regulatory protein family. PSRP subfamily.

It carries out the reaction [pyruvate, water dikinase] + ADP = [pyruvate, water dikinase]-phosphate + AMP + H(+). The catalysed reaction is [pyruvate, water dikinase]-phosphate + phosphate + H(+) = [pyruvate, water dikinase] + diphosphate. Its function is as follows. Bifunctional serine/threonine kinase and phosphorylase involved in the regulation of the phosphoenolpyruvate synthase (PEPS) by catalyzing its phosphorylation/dephosphorylation. The chain is Putative phosphoenolpyruvate synthase regulatory protein from Aeromonas salmonicida (strain A449).